The chain runs to 662 residues: DNA ligase (662 aa).

NAD(+)-binding positions include 31–35, 79–80, and glutamate 119; these read DSEYD and SL. The N6-AMP-lysine intermediate role is filled by lysine 121. NAD(+) is bound by residues arginine 142, glutamate 176, lysine 288, and lysine 312. Zn(2+) contacts are provided by cysteine 405, cysteine 408, cysteine 421, and cysteine 427. The BRCT domain maps to 583-662; the sequence is NIEKKLDNLT…DELNSFLDNL (80 aa).

Belongs to the NAD-dependent DNA ligase family. LigA subfamily. Requires Mg(2+) as cofactor. The cofactor is Mn(2+).

It catalyses the reaction NAD(+) + (deoxyribonucleotide)n-3'-hydroxyl + 5'-phospho-(deoxyribonucleotide)m = (deoxyribonucleotide)n+m + AMP + beta-nicotinamide D-nucleotide.. DNA ligase that catalyzes the formation of phosphodiester linkages between 5'-phosphoryl and 3'-hydroxyl groups in double-stranded DNA using NAD as a coenzyme and as the energy source for the reaction. It is essential for DNA replication and repair of damaged DNA. This chain is DNA ligase, found in Finegoldia magna (strain ATCC 29328 / DSM 20472 / WAL 2508) (Peptostreptococcus magnus).